Reading from the N-terminus, the 179-residue chain is Peptidyl-tRNA hydrolase (179 aa).

Tyr14 is a binding site for tRNA. The active-site Proton acceptor is the His19. Tyr61, Asn63, and Asn107 together coordinate tRNA.

This sequence belongs to the PTH family. In terms of assembly, monomer.

It localises to the cytoplasm. It carries out the reaction an N-acyl-L-alpha-aminoacyl-tRNA + H2O = an N-acyl-L-amino acid + a tRNA + H(+). Its function is as follows. Hydrolyzes ribosome-free peptidyl-tRNAs (with 1 or more amino acids incorporated), which drop off the ribosome during protein synthesis, or as a result of ribosome stalling. In terms of biological role, catalyzes the release of premature peptidyl moieties from peptidyl-tRNA molecules trapped in stalled 50S ribosomal subunits, and thus maintains levels of free tRNAs and 50S ribosomes. The chain is Peptidyl-tRNA hydrolase from Campylobacter lari (strain RM2100 / D67 / ATCC BAA-1060).